Here is a 228-residue protein sequence, read N- to C-terminus: PKHD-type hydroxylase YbiX (228 aa).

Residues 78 to 177 (TLSTPLFNRY…RVASFIWIQS (100 aa)) form the Fe2OG dioxygenase domain. Fe cation contacts are provided by His96, Asp98, and His158. 2-oxoglutarate is bound at residue Arg168.

Requires Fe(2+) as cofactor. It depends on L-ascorbate as a cofactor.

This chain is PKHD-type hydroxylase YbiX, found in Escherichia coli O157:H7.